A 532-amino-acid polypeptide reads, in one-letter code: Telomerase Cajal body protein 1 (532 aa).

The disordered stretch occupies residues 1–48 (MKTSEELRLAPDSLPSDLVPAPVLQASPADKNTDSEPVPPPCGGDDQL). Phosphoserine is present on residues S27, S61, and S83. The disordered stretch occupies residues 83 to 115 (SPRIEEQEVPENASLPVEETNRPELESGEAMEG). WD repeat units follow at residues 151–190 (RSEN…YSES), 206–251 (EGDT…LRAS), 256–297 (NHLD…RDCE), 307–348 (GQSG…ALLG), 349–389 (GHQG…HLLW), and 395–434 (VTTN…SDCK). A Phosphothreonine modification is found at T474. A Phosphoserine modification is found at S476. Residues 505–532 (CGGGPDPSNPDEDQDEKGQGRTEAVGMS) are disordered.

This sequence belongs to the TCAB1 family. In terms of assembly, component of the telomerase holoenzyme complex composed of one molecule of TERT, one molecule of WRAP53/TCAB1, two molecules of H/ACA ribonucleoprotein complex subunits DKC1, NOP10, NHP2 and GAR1, and a telomerase RNA template component (TERC). The telomerase holoenzyme complex is associated with TEP1, SMG6/EST1A and POT1. Interacts with the chaperonin-containing T-complex (TRiC) complex; which mediates the folding of WRAP53/TCAB1. Interacts with COIL. Interacts with SMN1. Interacts with RNF8. Interacts with histone H2AX. Post-translationally, phosphorylated at Ser-61 by ATM in response to DNA damage, promoting its interaction with histone H2AX and localization to sites of DNA double-strand breaks.

Its subcellular location is the nucleus. It is found in the cajal body. The protein resides in the chromosome. It localises to the telomere. In terms of biological role, RNA chaperone that plays a key role in telomere maintenance and RNA localization to Cajal bodies. Specifically recognizes and binds the Cajal body box (CAB box) present in both small Cajal body RNAs (scaRNAs) and telomerase RNA template component (TERC). Essential component of the telomerase holoenzyme complex, a ribonucleoprotein complex essential for the replication of chromosome termini that elongates telomeres in most eukaryotes. In the telomerase holoenzyme complex, required to stimulate the catalytic activity of the complex. Acts by specifically binding the CAB box of the TERC RNA and controlling the folding of the CR4/CR5 region of the TERC RNA, a critical step for telomerase activity. In addition, also controls telomerase holoenzyme complex localization to Cajal body. During S phase, required for delivery of TERC to telomeres during S phase and for telomerase activity. In addition to its role in telomere maintenance, also required for Cajal body formation, probably by mediating localization of scaRNAs to Cajal bodies. Also plays a role in DNA repair: phosphorylated by ATM in response to DNA damage and relocalizes to sites of DNA double-strand breaks to promote the repair of DNA double-strand breaks. Acts by recruiting the ubiquitin ligase RNF8 to DNA breaks and promote both homologous recombination (HR) and non-homologous end joining (NHEJ). In Rattus norvegicus (Rat), this protein is Telomerase Cajal body protein 1.